Here is a 716-residue protein sequence, read N- to C-terminus: 1,4-alpha-glucan branching enzyme GlgB (716 aa).

Asp-398 serves as the catalytic Nucleophile. The active-site Proton donor is the Glu-451.

It belongs to the glycosyl hydrolase 13 family. GlgB subfamily. In terms of assembly, monomer.

The enzyme catalyses Transfers a segment of a (1-&gt;4)-alpha-D-glucan chain to a primary hydroxy group in a similar glucan chain.. It functions in the pathway glycan biosynthesis; glycogen biosynthesis. Its function is as follows. Catalyzes the formation of the alpha-1,6-glucosidic linkages in glycogen by scission of a 1,4-alpha-linked oligosaccharide from growing alpha-1,4-glucan chains and the subsequent attachment of the oligosaccharide to the alpha-1,6 position. The protein is 1,4-alpha-glucan branching enzyme GlgB of Nitrobacter hamburgensis (strain DSM 10229 / NCIMB 13809 / X14).